The primary structure comprises 134 residues: Rubredoxin-2 (134 aa).

The Rubredoxin-like domain maps to 1 to 53 (MAKYQCPDCQYIYDECKGEPHEGFQPNTNWGEIPEEWACPDCAVRDKIDFKML). The Fe cation site is built by cysteine 6, cysteine 9, cysteine 39, and cysteine 42. Residues 99–116 (SITDERENTPDNKVERRS) are compositionally biased toward basic and acidic residues. Positions 99–134 (SITDERENTPDNKVERRSQSQAVRRSSVKKIKNNKR) are disordered. Residues 124–134 (SSVKKIKNNKR) show a composition bias toward basic residues.

It belongs to the rubredoxin family. Fe(3+) is required as a cofactor.

It is found in the cytoplasm. It participates in hydrocarbon metabolism; alkane degradation. Its function is as follows. Involved in the hydrocarbon hydroxylating system, which transfers electrons from NADH to rubredoxin reductase and then through rubredoxin to alkane 1 monooxygenase. The chain is Rubredoxin-2 (alkF) from Pseudomonas putida (Arthrobacter siderocapsulatus).